The primary structure comprises 176 residues: ATP synthase subunit delta (176 aa).

This sequence belongs to the ATPase delta chain family. F-type ATPases have 2 components, F(1) - the catalytic core - and F(0) - the membrane proton channel. F(1) has five subunits: alpha(3), beta(3), gamma(1), delta(1), epsilon(1). F(0) has three main subunits: a(1), b(2) and c(10-14). The alpha and beta chains form an alternating ring which encloses part of the gamma chain. F(1) is attached to F(0) by a central stalk formed by the gamma and epsilon chains, while a peripheral stalk is formed by the delta and b chains.

The protein localises to the cell inner membrane. Functionally, f(1)F(0) ATP synthase produces ATP from ADP in the presence of a proton or sodium gradient. F-type ATPases consist of two structural domains, F(1) containing the extramembraneous catalytic core and F(0) containing the membrane proton channel, linked together by a central stalk and a peripheral stalk. During catalysis, ATP synthesis in the catalytic domain of F(1) is coupled via a rotary mechanism of the central stalk subunits to proton translocation. This protein is part of the stalk that links CF(0) to CF(1). It either transmits conformational changes from CF(0) to CF(1) or is implicated in proton conduction. This Campylobacter curvus (strain 525.92) protein is ATP synthase subunit delta.